A 172-amino-acid polypeptide reads, in one-letter code: uncharacterized protein (172 aa).

Belongs to the archaeal NMN adenylyltransferase family.

This is an uncharacterized protein from Aeropyrum pernix (strain ATCC 700893 / DSM 11879 / JCM 9820 / NBRC 100138 / K1).